The sequence spans 448 residues: Glutamyl-tRNA reductase (448 aa).

Substrate is bound by residues 49-52, Ser109, 114-116, and Gln120; these read TCNR and ETQ. The Nucleophile role is filled by Cys50. NADP(+) is bound at residue 189–194; it reads GAGEMS.

It belongs to the glutamyl-tRNA reductase family. In terms of assembly, homodimer.

It catalyses the reaction (S)-4-amino-5-oxopentanoate + tRNA(Glu) + NADP(+) = L-glutamyl-tRNA(Glu) + NADPH + H(+). It participates in porphyrin-containing compound metabolism; protoporphyrin-IX biosynthesis; 5-aminolevulinate from L-glutamyl-tRNA(Glu): step 1/2. Catalyzes the NADPH-dependent reduction of glutamyl-tRNA(Glu) to glutamate 1-semialdehyde (GSA). The sequence is that of Glutamyl-tRNA reductase from Staphylococcus aureus (strain MRSA252).